The primary structure comprises 183 residues: MTATAQQLEFLKNSIKSIQDYPKPGILFRDVTSLLEDPKAYALSIELLVERYKNAGITKVVGTEARGFLFGAPVALGLGVGFVPVRKPRKLPRETIAETYELEYGTDQLEIHVDAIKPGDNVLVVDDLLATGGTIEATVKLIRRLGGKVTDAAFIINLFDLGGEQRLEKQGITCYSLVPFPGH.

This sequence belongs to the purine/pyrimidine phosphoribosyltransferase family. As to quaternary structure, homodimer.

It localises to the cytoplasm. The enzyme catalyses AMP + diphosphate = 5-phospho-alpha-D-ribose 1-diphosphate + adenine. It functions in the pathway purine metabolism; AMP biosynthesis via salvage pathway; AMP from adenine: step 1/1. In terms of biological role, catalyzes a salvage reaction resulting in the formation of AMP, that is energically less costly than de novo synthesis. The chain is Adenine phosphoribosyltransferase from Salmonella paratyphi C (strain RKS4594).